We begin with the raw amino-acid sequence, 1252 residues long: ABC transporter B family member 19 (1252 aa).

Asn5 carries N-linked (GlcNAc...) asparagine glycosylation. One can recognise an ABC transmembrane type-1 1 domain in the interval 41–330 (MFVGSLGAIV…SFSNLGAFSK (290 aa)). 2 helical membrane passes run 42-62 (FVGSLGAIVHGSSMPVFFLLF) and 88-108 (LYFVYLGLVVCFSSYAEIACW). Residue Asp136 participates in ATP binding. 4 consecutive transmembrane segments (helical) span residues 163-183 (VGNFIHYLSTFLAGLVVGFVS), 187-207 (LALLSVAVIPGIAFAGGLYAY), 274-294 (CTYGIACMSWALVFWYAGVFI), and 308-328 (IFSAIVGGMSLGQSFSNLGAF). 2 residues coordinate brassinolide: Tyr276 and Trp283. The region spanning 365–601 (IEFKDVTFSY…SGAYASLIRF (237 aa)) is the ABC transporter 1 domain. ATP contacts are provided by Tyr374, Ser376, Gly405, Lys406, Ser407, Thr408, and Glu529. N-linked (GlcNAc...) asparagine glycosylation is present at Asn641. In terms of domain architecture, ABC transmembrane type-1 2 spans 687–975 (SIMGAVGSIL…TVSLAPEIIR (289 aa)). Transmembrane regions (helical) follow at residues 688–708 (IMGAVGSILSGFIGPTFAIVM) and 732–752 (FIYIGAGLYAVGAYLIQHYFF). The N-linked (GlcNAc...) asparagine glycan is linked to Asn758. Asp780 lines the ATP pocket. N-linked (GlcNAc...) asparagine glycosylation is found at Asn785 and Asn814. A run of 3 helical transmembrane segments spans residues 822-842 (FIVAFIVEWRVSLLILGTFPL), 914-934 (GFLFGLSQLALYGSEALILWY), and 949-969 (VIKVFVVLVITANSVAETVSL). Residues 965–1252 (ETVSLAPEII…RLLQLQTHRI (288 aa)) are interaction with FKBP42/TWD1. Residues 1010–1246 (IEFRHVDFAY…PEGAYSRLLQ (237 aa)) form the ABC transporter 2 domain. The ATP site is built by Tyr1019, Ser1021, Arg1022, Lys1051, Ser1052, and Ser1053.

It belongs to the ABC transporter superfamily. ABCB family. Multidrug resistance exporter (TC 3.A.1.201) subfamily. Interacts with 1-naphthylphthalamic acid (NPA), and FKBP42/TWD1. Post-translationally, phosphorylated by PHOT1 in phototropic seedlings, to modulates auxin export and distribution and regulates leaf and petiole curling. As to expression, ubiquitous, mostly in shoot meristems. Present in the majority of stem cells, predominantly in a non-polar manner. Accumulates in seedlings roots and hypocotyls, and in roots apices and inflorescences.

It is found in the cell membrane. It carries out the reaction (indol-3-yl)acetate(in) + ATP + H2O = (indol-3-yl)acetate(out) + ADP + phosphate + H(+). It catalyses the reaction brassinolide(in) + ATP + H2O = brassinolide(out) + ADP + phosphate + H(+). The catalysed reaction is 24-epi-brassinolide(in) + ATP + H2O = 24-epi-brassinolide(out) + ADP + phosphate + H(+). The enzyme catalyses 24-epi-castasterone(in) + ATP + H2O = 24-epi-castasterone(out) + ADP + phosphate + H(+). It carries out the reaction castasterone(in) + ATP + H2O = castasterone(out) + ADP + phosphate + H(+). With respect to regulation, transport capacity is stimulated by the chaperone protein FKBP42/TWD1. ATPase activity is specifically activated by bioactive brassinosteroids in a dose-dependent manner, including brassinolide (BL), 24-epiBL and 24-epicastasterone (24-epiCS). Inhibited by vanadate. Brassinosteroid exporter that, in conjunction with ABCB1, supports the accumulation of exogenous brassinosteroids (BR) in the apoplast, thus promoting BR signaling initiation involving the specific receptor BRI1 and required for plant growth and stress responses. Mediates the transport of castasterone (CSA) and brassinolide (BL) across the plasma membrane. Auxin efflux transporter that acts as a negative regulator of light signaling to promote hypocotyl elongation by mediating leaf tip to petiole auxin flux. Required for the regulation of leaf position and morphology during PHOT1-mediated blue light responses involving auxin distribution, especially in low light fluence. Together with ABCB1 and in a FKBP42/TWD1-dependent manner, supports seed development by promoting stamen elongation and, to a lesser extent, anther dehiscence and pollen maturation, probably as auxin transporters. Contributes to the connective auxin transport (CAT) that ensures communication across the shoot system, including auxin loading at axillary bud apices to influence strigolactone-mediated bud outgrowth responses and shoot branching control. Mediates the accumulation of chlorophyll and anthocyanin, as well as the expression of genes in response to light. Participates in auxin efflux and thus regulates the polar auxin basipetal transport (from auxin-producing leaves to auxin-sensitive tissues, and from root tips to root elongating zone). Involved in diverse auxin-mediated responses including gravitropism, phototropism and lateral root formation. Required for the regulation of organ bending, such as gravitropic root bending. In Arabidopsis thaliana (Mouse-ear cress), this protein is ABC transporter B family member 19.